A 465-amino-acid polypeptide reads, in one-letter code: Ribulose bisphosphate carboxylase large chain (465 aa).

Lys-4 bears the N6,N6,N6-trimethyllysine mark. Residues Asn-113 and Thr-163 each contribute to the substrate site. Lys-165 functions as the Proton acceptor in the catalytic mechanism. Residue Lys-167 coordinates substrate. The Mg(2+) site is built by Lys-191, Asp-193, and Glu-194. Position 191 is an N6-carboxylysine (Lys-191). Catalysis depends on His-284, which acts as the Proton acceptor. Positions 285, 317, and 369 each coordinate substrate.

This sequence belongs to the RuBisCO large chain family. Type I subfamily. In terms of assembly, heterohexadecamer of 8 large chains and 8 small chains; disulfide-linked. The disulfide link is formed within the large subunit homodimers. The cofactor is Mg(2+). The disulfide bond which can form in the large chain dimeric partners within the hexadecamer appears to be associated with oxidative stress and protein turnover.

The protein resides in the plastid. It is found in the chloroplast. It catalyses the reaction 2 (2R)-3-phosphoglycerate + 2 H(+) = D-ribulose 1,5-bisphosphate + CO2 + H2O. It carries out the reaction D-ribulose 1,5-bisphosphate + O2 = 2-phosphoglycolate + (2R)-3-phosphoglycerate + 2 H(+). Its function is as follows. RuBisCO catalyzes two reactions: the carboxylation of D-ribulose 1,5-bisphosphate, the primary event in carbon dioxide fixation, as well as the oxidative fragmentation of the pentose substrate in the photorespiration process. Both reactions occur simultaneously and in competition at the same active site. The chain is Ribulose bisphosphate carboxylase large chain from Cornus canadensis (Bunchberry dogwood).